Consider the following 420-residue polypeptide: Polymerase delta-interacting protein 3 (420 aa).

Ala-2 is modified (N-acetylalanine). Residue Ser-5 is modified to Phosphoserine. Position 33 is an omega-N-methylarginine (Arg-33). Ser-127 is modified (phosphoserine). Position 140 is a phosphothreonine (Thr-140). A Glycyl lysine isopeptide (Lys-Gly) (interchain with G-Cter in SUMO2) cross-link involves residue Lys-200. 2 positions are modified to phosphoserine: Ser-215 and Ser-217. Lys-223 is covalently cross-linked (Glycyl lysine isopeptide (Lys-Gly) (interchain with G-Cter in SUMO2)). Residue Ser-244 is modified to Phosphoserine. Lys-248 participates in a covalent cross-link: Glycyl lysine isopeptide (Lys-Gly) (interchain with G-Cter in SUMO2). The interval 256 to 277 is disordered; it reads TLVNKEEPPKELPPAEPVLSPL. A Phosphoserine modification is found at Ser-275. The RRM domain maps to 280–351; that stretch reads TKMTVNNLHP…QPMKCNLHMN (72 aa). The disordered stretch occupies residues 369-394; it reads PSVKKESELPRRGNPASSNPPAEVDP. The segment covering 370–379 has biased composition (basic and acidic residues); sequence SVKKESELPR. Lys-372 participates in a covalent cross-link: Glycyl lysine isopeptide (Lys-Gly) (interchain with G-Cter in SUMO2). Ser-385 is subject to Phosphoserine. Lys-417 is covalently cross-linked (Glycyl lysine isopeptide (Lys-Gly) (interchain with G-Cter in SUMO2)).

Interacts with POLD2. Interacts with NCBP1 and EIF4A3. Associates with the multiprotein exon junction complex (EJC). Interacts with RPS6KB1 (activated). Interacts with ERH. Interacts with THOC2, DDX39B and ZC3H11A; the interactions are ATP-dependent and indicative for an association with the TREX complex.

It is found in the nucleus. The protein localises to the nucleus speckle. The protein resides in the cytoplasm. Is involved in regulation of translation. Is preferentially associated with CBC-bound spliced mRNA-protein complexes during the pioneer round of mRNA translation. Contributes to enhanced translational efficiency of spliced over nonspliced mRNAs. Recruits activated ribosomal protein S6 kinase beta-1 I/RPS6KB1 to newly synthesized mRNA. Involved in nuclear mRNA export; probably mediated by association with the TREX complex. The sequence is that of Polymerase delta-interacting protein 3 (Poldip3) from Mus musculus (Mouse).